A 237-amino-acid chain; its full sequence is Uracil-DNA glycosylase (237 aa).

Aspartate 77 functions as the Proton acceptor in the catalytic mechanism.

The protein belongs to the uracil-DNA glycosylase (UDG) superfamily. UNG family.

Its subcellular location is the cytoplasm. It catalyses the reaction Hydrolyzes single-stranded DNA or mismatched double-stranded DNA and polynucleotides, releasing free uracil.. Its function is as follows. Excises uracil residues from the DNA which can arise as a result of misincorporation of dUMP residues by DNA polymerase or due to deamination of cytosine. This Acinetobacter baumannii (strain AB307-0294) protein is Uracil-DNA glycosylase.